A 364-amino-acid polypeptide reads, in one-letter code: sn-glycerol-3-phosphate import ATP-binding protein UgpC (364 aa).

An ABC transporter domain is found at 4-235 (VVLRNVRKTY…PATTFVASFI (232 aa)). 37 to 44 (GPSGCGKS) provides a ligand contact to ATP.

The protein belongs to the ABC transporter superfamily. sn-glycerol-3-phosphate importer (TC 3.A.1.1.3) family. The complex is composed of two ATP-binding proteins (UgpC), two transmembrane proteins (UgpA and UgpE) and a solute-binding protein (UgpB).

It localises to the cell inner membrane. The catalysed reaction is sn-glycerol 3-phosphate(out) + ATP + H2O = sn-glycerol 3-phosphate(in) + ADP + phosphate + H(+). In terms of biological role, part of the ABC transporter complex UgpBAEC involved in sn-glycerol-3-phosphate (G3P) import. Responsible for energy coupling to the transport system. The polypeptide is sn-glycerol-3-phosphate import ATP-binding protein UgpC (Rhodopseudomonas palustris (strain HaA2)).